A 394-amino-acid chain; its full sequence is Nuclear hormone receptor family member nhr-18 (394 aa).

A DNA-binding region (nuclear receptor) is located at residues 8–83; that stretch reads SGSCEVCGDK…VGMDTRRFQT (76 aa). NR C4-type zinc fingers lie at residues 11 to 31 and 48 to 71; these read CEVCGDKTSGRHFGVMSCRAC and CPNGTCHTSVNGKFNCKQCRLKKC. One can recognise an NR LBD domain in the interval 134–394; the sequence is MLQKPTNHVL…FSHPEMFEAT (261 aa).

It belongs to the nuclear hormone receptor family.

Its subcellular location is the nucleus. Functionally, orphan nuclear receptor. In Caenorhabditis elegans, this protein is Nuclear hormone receptor family member nhr-18 (nhr-18).